Reading from the N-terminus, the 381-residue chain is uncharacterized protein (381 aa).

Belongs to the glycerate kinase type-1 family.

This is an uncharacterized protein from Mycobacterium tuberculosis (strain CDC 1551 / Oshkosh).